The following is a 187-amino-acid chain: Transcription antitermination protein NusB (187 aa).

Positions 135–187 are disordered; that stretch reads APAPESVAEEADEESSDSDAAASDPTDEGDVSDSSGASDEPAAPSAEIQPTVD. Acidic residues predominate over residues 141–151; it reads VAEEADEESSD.

The protein belongs to the NusB family.

Involved in transcription antitermination. Required for transcription of ribosomal RNA (rRNA) genes. Binds specifically to the boxA antiterminator sequence of the ribosomal RNA (rrn) operons. This Bifidobacterium longum subsp. infantis (strain ATCC 15697 / DSM 20088 / JCM 1222 / NCTC 11817 / S12) protein is Transcription antitermination protein NusB.